Reading from the N-terminus, the 252-residue chain is Imidazole glycerol phosphate synthase subunit HisF (252 aa).

Residues Asp-11 and Asp-130 contribute to the active site.

This sequence belongs to the HisA/HisF family. In terms of assembly, heterodimer of HisH and HisF.

The protein localises to the cytoplasm. It catalyses the reaction 5-[(5-phospho-1-deoxy-D-ribulos-1-ylimino)methylamino]-1-(5-phospho-beta-D-ribosyl)imidazole-4-carboxamide + L-glutamine = D-erythro-1-(imidazol-4-yl)glycerol 3-phosphate + 5-amino-1-(5-phospho-beta-D-ribosyl)imidazole-4-carboxamide + L-glutamate + H(+). It participates in amino-acid biosynthesis; L-histidine biosynthesis; L-histidine from 5-phospho-alpha-D-ribose 1-diphosphate: step 5/9. Functionally, IGPS catalyzes the conversion of PRFAR and glutamine to IGP, AICAR and glutamate. The HisF subunit catalyzes the cyclization activity that produces IGP and AICAR from PRFAR using the ammonia provided by the HisH subunit. This is Imidazole glycerol phosphate synthase subunit HisF from Polynucleobacter necessarius subsp. necessarius (strain STIR1).